Reading from the N-terminus, the 300-residue chain is GTPase Era (300 aa).

One can recognise an Era-type G domain in the interval 8-176; the sequence is RCGYVAIVGR…ESLIASHLPE (169 aa). The segment at 16–23 is G1; it reads GRPNVGKS. 16–23 provides a ligand contact to GTP; sequence GRPNVGKS. Positions 42–46 are G2; it reads QTTRH. The tract at residues 63-66 is G3; sequence DTPG. GTP contacts are provided by residues 63-67 and 125-128; these read DTPGM and NKTD. Residues 125-128 are G4; the sequence is NKTD. The interval 155 to 157 is G5; it reads ISA. Positions 199–283 constitute a KH type-2 domain; sequence VREKIMRQLG…MLNLWVKVKG (85 aa).

Belongs to the TRAFAC class TrmE-Era-EngA-EngB-Septin-like GTPase superfamily. Era GTPase family. As to quaternary structure, monomer.

It localises to the cytoplasm. The protein resides in the cell inner membrane. In terms of biological role, an essential GTPase that binds both GDP and GTP, with rapid nucleotide exchange. Plays a role in 16S rRNA processing and 30S ribosomal subunit biogenesis and possibly also in cell cycle regulation and energy metabolism. The protein is GTPase Era of Pseudomonas savastanoi pv. phaseolicola (strain 1448A / Race 6) (Pseudomonas syringae pv. phaseolicola (strain 1448A / Race 6)).